The chain runs to 239 residues: Pimeloyl-[acyl-carrier protein] methyl ester esterase (239 aa).

Substrate-binding positions include Trp20, 77–78 (SM), and 138–142 (FISLQ). Ser77 (nucleophile) is an active-site residue. Active-site residues include Asp192 and His220. Residue His220 participates in substrate binding.

Belongs to the AB hydrolase superfamily. Carboxylesterase BioH family. In terms of assembly, monomer.

The protein resides in the cytoplasm. The catalysed reaction is 6-carboxyhexanoyl-[ACP] methyl ester + H2O = 6-carboxyhexanoyl-[ACP] + methanol + H(+). It participates in cofactor biosynthesis; biotin biosynthesis. Its function is as follows. The physiological role of BioH is to remove the methyl group introduced by BioC when the pimeloyl moiety is complete. It allows to synthesize pimeloyl-ACP via the fatty acid synthetic pathway through the hydrolysis of the ester bonds of pimeloyl-ACP esters. This is Pimeloyl-[acyl-carrier protein] methyl ester esterase from Legionella pneumophila (strain Paris).